A 251-amino-acid polypeptide reads, in one-letter code: Flap endonuclease Xni (251 aa).

Position 104 (aspartate 104) interacts with Mg(2+). The 5'-3' exonuclease domain occupies 160–250; the sequence is VQPQQLPDYW…DGNLQQLRLK (91 aa). Leucine 171, alanine 172, proline 180, valine 182, and isoleucine 185 together coordinate K(+). The segment at 184–189 is interaction with DNA; the sequence is GIGPKS.

It belongs to the Xni family. Mg(2+) is required as a cofactor. K(+) serves as cofactor.

Its function is as follows. Has flap endonuclease activity. During DNA replication, flap endonucleases cleave the 5'-overhanging flap structure that is generated by displacement synthesis when DNA polymerase encounters the 5'-end of a downstream Okazaki fragment. The chain is Flap endonuclease Xni from Escherichia fergusonii (strain ATCC 35469 / DSM 13698 / CCUG 18766 / IAM 14443 / JCM 21226 / LMG 7866 / NBRC 102419 / NCTC 12128 / CDC 0568-73).